Consider the following 273-residue polypeptide: MKKFSLVAAALIAGVALNVNAATVATVNGKSISDAEVSEFFAPMLRGQDFKTLPDNQKKALIQQYIMQDLILQDAKKQNLEKDPLYTKELDRAKDAILVNVYQEKILNTIKIDAAKVKAFYDQNKDKYVKPARVQAKHILVATEKEAKDIINELKGLKGKELDAKFSELAKEKSIDPGSKNQGGELGWFDQSTMVKPFTDAAFALKNGTITTTPVKTNFGYHVILKENSQAKGQIKFDEVKQGIENGLKFEEFKKVINQKGQDLLNSAKVEYK.

An N-terminal signal peptide occupies residues 1–21; that stretch reads MKKFSLVAAALIAGVALNVNA. In terms of domain architecture, PpiC spans 131-228; it reads PARVQAKHIL…FGYHVILKEN (98 aa).

It carries out the reaction [protein]-peptidylproline (omega=180) = [protein]-peptidylproline (omega=0). The sequence is that of Putative peptidyl-prolyl cis-trans isomerase Cbf2 (cbf2) from Campylobacter jejuni subsp. jejuni serotype O:23/36 (strain 81-176).